A 442-amino-acid polypeptide reads, in one-letter code: Mirror-image polydactyly gene 1 protein (442 aa).

Positions 1–39 are disordered; the sequence is MENWSKDITHSYLEQETTGINKSTQPDEQLTMNSEKSMH. The segment covering 12–35 has biased composition (polar residues); sequence YLEQETTGINKSTQPDEQLTMNSE. Coiled coils occupy residues 107 to 212 and 253 to 435; these read SDKE…LENI and ECKM…KVGT.

Expressed very weakly in heart, liver, skeletal muscle, kidney, pancreas and fetal kidney. Not detected in brain, placenta and lung.

The chain is Mirror-image polydactyly gene 1 protein (MIPOL1) from Homo sapiens (Human).